We begin with the raw amino-acid sequence, 402 residues long: Olfactomedin-like protein 1 (402 aa).

Positions 1–28 (MMVALPGASASLVLFLAAFLPPLQHAQD) are cleaved as a signal peptide. Asn-66 carries N-linked (GlcNAc...) asparagine glycosylation. A coiled-coil region spans residues 73–135 (RCQTHTNEYR…EAEEEKKIRT (63 aa)). N-linked (GlcNAc...) asparagine glycans are attached at residues Asn-138 and Asn-183. In terms of domain architecture, Olfactomedin-like spans 140-397 (SCDNMLMAIK…QIIYKLQTKK (258 aa)). The cysteines at positions 141 and 324 are disulfide-linked.

In terms of processing, highly N-glycosylated.

The protein resides in the secreted. The protein is Olfactomedin-like protein 1 (Olfml1) of Rattus norvegicus (Rat).